The following is an 81-amino-acid chain: uncharacterized protein (81 aa).

The first 22 residues, 1–22 (MNKKLSIIFLIFALIASVLCSA), serve as a signal peptide directing secretion. Residues 29-81 (HSSSTTTTTSSSGGTSGTDSSINTGSSYSGSGSGSGSTGGSGSGSGSGTAKWK) form a disordered region. A compositionally biased stretch (low complexity) spans 30–58 (SSSTTTTTSSSGGTSGTDSSINTGSSYSG). A compositionally biased stretch (gly residues) spans 59–75 (SGSGSGSTGGSGSGSGS).

The protein localises to the secreted. This is an uncharacterized protein from Dictyostelium discoideum (Social amoeba).